The sequence spans 500 residues: NAD(P)H-quinone oxidoreductase chain 4, chloroplastic (500 aa).

14 helical membrane passes run 4 to 24, 35 to 55, 87 to 107, 113 to 130, 134 to 154, 167 to 187, 208 to 228, 242 to 262, 272 to 292, 305 to 325, 330 to 350, 386 to 406, 416 to 436, and 462 to 482; these read FPWL…IFFL, YTIC…CYHF, IGPI…AWPV, LFHF…GLFS, LLLF…LLAM, FILY…GVAL, VLEI…SPII, HYST…YGLI, AHSI…IYAA, IAYS…SLTD, GALL…FLAG, LALP…GIIT, LLIT…SLSM, and LFLS…PDFV.

Belongs to the complex I subunit 4 family.

It is found in the plastid. It localises to the chloroplast thylakoid membrane. It carries out the reaction a plastoquinone + NADH + (n+1) H(+)(in) = a plastoquinol + NAD(+) + n H(+)(out). It catalyses the reaction a plastoquinone + NADPH + (n+1) H(+)(in) = a plastoquinol + NADP(+) + n H(+)(out). This Solanum lycopersicum (Tomato) protein is NAD(P)H-quinone oxidoreductase chain 4, chloroplastic.